Here is a 411-residue protein sequence, read N- to C-terminus: G2/mitotic-specific cyclin cig2 (411 aa).

Positions 51–60 (RTVLSDVSNV) match the Destruction box motif. Positions 57-89 (VSNVGKNNADEKDTKKAKRSFDESNLSTNEEAD) are disordered. The segment covering 64 to 78 (NADEKDTKKAKRSFD) has biased composition (basic and acidic residues). The 127-residue stretch at 139–265 (EIFEYIRKLD…MLNVLNFDLS (127 aa)) folds into the Cyclin N-terminal domain. Residues 181 to 273 (SNFCLMPETL…LSYPSPLNFL (93 aa)) form an interaction with pop1 region.

Belongs to the cyclin family. Cyclin AB subfamily. As to quaternary structure, associates with cdc2, res2 and rum1. Interacts with pop1 only when phosphorylated. Post-translationally, phosphorylated.

The protein localises to the nucleus. It localises to the cytoplasm. The protein resides in the cytoskeleton. Its subcellular location is the microtubule organizing center. It is found in the spindle pole body. In terms of biological role, essential for the control of the cell cycle at the G2/M and G1/S (mitosis) transition. Interacts with the cdc2 protein kinase to form MPF. Interaction with res2 promotes the phosphorylation of res1 and inhibits MBF-dependent gene transcription. Forms an autoregulating feedback-inhibition loop with MBF which is important for normal regulation of the cell cycle. G2/M cyclins accumulate steadily during G2 and are abruptly destroyed at mitosis. Negatively regulates conjugation via interacting with cell cycle 'start' genes. Degraded by skp1, pop1 and pop2 in the G2 and M phases of the cell cycle. The polypeptide is G2/mitotic-specific cyclin cig2 (cig2) (Schizosaccharomyces pombe (strain 972 / ATCC 24843) (Fission yeast)).